The sequence spans 586 residues: Merlin (586 aa).

Position 9 is a phosphoserine (serine 9). The 290-residue stretch at 18–307 (FTVRIVTMDA…GNHDLFMRRR (290 aa)) folds into the FERM domain. A disordered region spans residues 325–354 (KARKQMERQRLAREKQMREEAERSRDEPER). Serine 514 carries the post-translational modification Phosphoserine; by PAK. A disordered region spans residues 557–586 (LHSEHSDSGTSSKHNTIKKPQAQGRRPICI).

Interacts with NHERF1, HGS and AGAP2. Interacts with SGSM3. Interacts (via FERM domain) with MPP1. Interacts with LAYN and WWC1. Interacts with the CUL4A-RBX1-DDB1-VprBP/DCAF1 E3 ubiquitin-protein ligase complex. The unphosphorylated form interacts (via FERM domain) with VPRBP/DCAF1. Interacts (via FERM domain) with NOP53; the interaction is direct. Interacts with SCHIP1; the interaction is direct. In terms of processing, ubiquitinated by the CUL4A-RBX1-DDB1-DCAF1/VprBP E3 ubiquitin-protein ligase complex for ubiquitination and subsequent proteasome-dependent degradation. Post-translationally, phosphorylation of Ser-514 inhibits nuclear localization by disrupting the intramolecular association of the FERM domain with the C-terminal tail. The dephosphorylation of Ser-514 favors the interaction with NOP53.

It is found in the cell membrane. Its subcellular location is the cell projection. It localises to the cytoplasm. The protein localises to the cytoskeleton. The protein resides in the nucleus. Probable regulator of the Hippo/SWH (Sav/Wts/Hpo) signaling pathway, a signaling pathway that plays a pivotal role in tumor suppression by restricting proliferation and promoting apoptosis. Along with WWC1 can synergistically induce the phosphorylation of LATS1 and LATS2 and can probably function in the regulation of the Hippo/SWH (Sav/Wts/Hpo) signaling pathway. May act as a membrane stabilizing protein. May inhibit PI3 kinase by binding to AGAP2 and impairing its stimulating activity. Suppresses cell proliferation and tumorigenesis by inhibiting the CUL4A-RBX1-DDB1-VprBP/DCAF1 E3 ubiquitin-protein ligase complex Plays a role in lens development and is required for complete fiber cell terminal differentiation, maintenance of cell polarity and separation of the lens vesicle from the corneal epithelium. The protein is Merlin (Nf2) of Rattus norvegicus (Rat).